The primary structure comprises 136 residues: Aspartate 1-decarboxylase (136 aa).

The active-site Schiff-base intermediate with substrate; via pyruvic acid is S25. A Pyruvic acid (Ser) modification is found at S25. Position 57 (T57) interacts with substrate. Y58 acts as the Proton donor in catalysis. 73-75 contributes to the substrate binding site; the sequence is GAA.

It belongs to the PanD family. Heterooctamer of four alpha and four beta subunits. It depends on pyruvate as a cofactor. Is synthesized initially as an inactive proenzyme, which is activated by self-cleavage at a specific serine bond to produce a beta-subunit with a hydroxyl group at its C-terminus and an alpha-subunit with a pyruvoyl group at its N-terminus.

It localises to the cytoplasm. It carries out the reaction L-aspartate + H(+) = beta-alanine + CO2. It functions in the pathway cofactor biosynthesis; (R)-pantothenate biosynthesis; beta-alanine from L-aspartate: step 1/1. In terms of biological role, catalyzes the pyruvoyl-dependent decarboxylation of aspartate to produce beta-alanine. In Mycolicibacterium smegmatis (strain ATCC 700084 / mc(2)155) (Mycobacterium smegmatis), this protein is Aspartate 1-decarboxylase.